A 96-amino-acid polypeptide reads, in one-letter code: DNA-directed RNA polymerase subunit Rpo11 (96 aa).

The protein belongs to the archaeal Rpo11/eukaryotic RPB11/RPC19 RNA polymerase subunit family. Part of the RNA polymerase complex.

The protein localises to the cytoplasm. The catalysed reaction is RNA(n) + a ribonucleoside 5'-triphosphate = RNA(n+1) + diphosphate. DNA-dependent RNA polymerase (RNAP) catalyzes the transcription of DNA into RNA using the four ribonucleoside triphosphates as substrates. This is DNA-directed RNA polymerase subunit Rpo11 from Nanoarchaeum equitans (strain Kin4-M).